A 325-amino-acid chain; its full sequence is Tagatose 1,6-diphosphate aldolase 1 (325 aa).

Belongs to the aldolase LacD family.

The enzyme catalyses D-tagatofuranose 1,6-bisphosphate = D-glyceraldehyde 3-phosphate + dihydroxyacetone phosphate. Its pathway is carbohydrate metabolism; D-tagatose 6-phosphate degradation; D-glyceraldehyde 3-phosphate and glycerone phosphate from D-tagatose 6-phosphate: step 2/2. The protein is Tagatose 1,6-diphosphate aldolase 1 of Streptococcus agalactiae serotype III (strain NEM316).